Consider the following 99-residue polypeptide: Malonate decarboxylase acyl carrier protein (99 aa).

O-(phosphoribosyl dephospho-coenzyme A)serine is present on Ser25.

The protein belongs to the MdcC family. Covalently binds the prosthetic group of malonate decarboxylase.

It localises to the cytoplasm. Its function is as follows. Subunit of malonate decarboxylase, it is an acyl carrier protein to which acetyl and malonyl thioester residues are bound via a 2'-(5''-phosphoribosyl)-3'-dephospho-CoA prosthetic group and turn over during the catalytic mechanism. In Pseudomonas fluorescens (strain Pf0-1), this protein is Malonate decarboxylase acyl carrier protein.